The chain runs to 254 residues: NAD-dependent protein deacylase (254 aa).

The 250-residue stretch at 1 to 250 folds into the Deacetylase sirtuin-type domain; the sequence is MERLEEARKR…LPPSPEDQAE (250 aa). Residue 22–41 participates in NAD(+) binding; it reads GAGISKPSGIPTFRDAEGLW. The substrate site is built by Y66 and R69. NAD(+) is bound at residue 104 to 107; the sequence is QNVD. H122 acts as the Proton acceptor in catalysis. 4 residues coordinate Zn(2+): C130, C133, C149, and C152. Residues 189 to 191, 215 to 217, and A233 each bind NAD(+); these read GTS and NPE.

It belongs to the sirtuin family. Class III subfamily. Zn(2+) serves as cofactor.

It localises to the cytoplasm. It carries out the reaction N(6)-acetyl-L-lysyl-[protein] + NAD(+) + H2O = 2''-O-acetyl-ADP-D-ribose + nicotinamide + L-lysyl-[protein]. It catalyses the reaction N(6)-succinyl-L-lysyl-[protein] + NAD(+) + H2O = 2''-O-succinyl-ADP-D-ribose + nicotinamide + L-lysyl-[protein]. In terms of biological role, NAD-dependent lysine deacetylase and desuccinylase that specifically removes acetyl and succinyl groups on target proteins. Modulates the activities of several proteins which are inactive in their acylated form. The sequence is that of NAD-dependent protein deacylase from Thermus thermophilus (strain ATCC BAA-163 / DSM 7039 / HB27).